Reading from the N-terminus, the 1368-residue chain is DNA-directed RNA polymerase subunit beta (1368 aa).

It belongs to the RNA polymerase beta chain family. As to quaternary structure, the RNAP catalytic core consists of 2 alpha, 1 beta, 1 beta' and 1 omega subunit. When a sigma factor is associated with the core the holoenzyme is formed, which can initiate transcription.

The enzyme catalyses RNA(n) + a ribonucleoside 5'-triphosphate = RNA(n+1) + diphosphate. Its function is as follows. DNA-dependent RNA polymerase catalyzes the transcription of DNA into RNA using the four ribonucleoside triphosphates as substrates. The protein is DNA-directed RNA polymerase subunit beta of Cupriavidus metallidurans (strain ATCC 43123 / DSM 2839 / NBRC 102507 / CH34) (Ralstonia metallidurans).